The following is a 1101-amino-acid chain: Serine/threonine-protein kinase PSK2 (1101 aa).

T118 is modified (phosphothreonine). In terms of domain architecture, Protein kinase spans 841 to 1099 (FTILQVMGEG…IDEIYEDKWL (259 aa)). Residues 847 to 855 (MGEGAYGKV) and K870 contribute to the ATP site. Residue D975 is the Proton acceptor of the active site.

Belongs to the protein kinase superfamily. Ser/Thr protein kinase family.

The protein resides in the cytoplasm. The enzyme catalyses L-seryl-[protein] + ATP = O-phospho-L-seryl-[protein] + ADP + H(+). It carries out the reaction L-threonyl-[protein] + ATP = O-phospho-L-threonyl-[protein] + ADP + H(+). Its function is as follows. Serine/threonine-protein kinase involved in the control of sugar metabolism and translation. Phosphorylates UGP1, which is required for normal glycogen and beta-(1,6)-glucan synthesis. This phosphorylation shifts glucose partitioning toward cell wall glucan synthesis at the expense of glycogen synthesis. Also phosphorylates the glycogen synthase GSY2 and the translation factors CAF20, TIF11 and SRO9. In Saccharomyces cerevisiae (strain ATCC 204508 / S288c) (Baker's yeast), this protein is Serine/threonine-protein kinase PSK2 (PSK2).